The sequence spans 578 residues: ATP-dependent RNA helicase dbp3 (578 aa).

Basic and acidic residues predominate over residues 59–69 (KRSADEEASVK). Positions 59–117 (KRSADEEASVKRKEKKSKHEHKKHKKDKPSADKDRISKKDKKKSKKGKSKTKEESIEIN) are disordered. Residues 70 to 85 (RKEKKSKHEHKKHKKD) are compositionally biased toward basic residues. Over residues 86–95 (KPSADKDRIS) the composition is skewed to basic and acidic residues. Residues 96-107 (KKDKKKSKKGKS) show a composition bias toward basic residues. Positions 167-193 (LQFDELDVSAKLREGLKNYKEPTPIQA) match the Q motif motif. Residues 196–373 (WPYLLAGRDV…ATFLKDPVKI (178 aa)) form the Helicase ATP-binding domain. 209–216 (AETGSGKT) provides a ligand contact to ATP. A DEAD box motif is present at residues 316–319 (DEAD). Positions 402–550 (MLDNLLRKHL…DIPEGLFKFG (149 aa)) constitute a Helicase C-terminal domain.

It belongs to the DEAD box helicase family. DDX5/DBP2 subfamily.

Its subcellular location is the nucleus. The protein resides in the nucleolus. It catalyses the reaction ATP + H2O = ADP + phosphate + H(+). Functionally, ATP-dependent RNA helicase required for 60S ribosomal subunit synthesis. Involved in efficient pre-rRNA processing, predominantly at site A3, which is necessary for the normal formation of 25S and 5.8S rRNAs. The polypeptide is ATP-dependent RNA helicase dbp3 (dbp3) (Schizosaccharomyces pombe (strain 972 / ATCC 24843) (Fission yeast)).